We begin with the raw amino-acid sequence, 702 residues long: MPRHGRRGKLPKGEKLPKKEGGDNTPSKLLSSMLKTLDLTFERDIGMLNGKSVRSIPNKKTLLELQSQLDSLNEILGTIARGDQETIEALRKIRDSKNEKQANDEKQETSNADGQHESSTATEETNIIDKGVQSPPKPPPSNEISGTIENDVESIKQAADNMAKEEINEDKDLQVHRDQPREKRPFDSETENRATENENTQRPDNKKQKIDVDKMENDPTVKNPKSEFVVSQTLPRAAAALGLFNEEGLESTGEDFLKKKYNVASYPTNDLKDLLPGELPDMDFSHPKPTNQIQFNTFLAFVENFFKDLSDDNLKFLKMKYIIPDSLQFDKTYDPEVNPFIIPKLGPLYTDVWFKDENDKNSAYKKPSPYSNDASTILPKKSANELDDNALESGSISCGPLLSRLLSAVLKDDNDKSELQSSKIIRDGGLPRTGGEDDIQSFRNNNNDTVDMTLSQENGPSVQTPDNDIDEEASFQAKLAENKGSNGGTTSTLPQQIGWITNGINLDYPTFEERLKRELKYVGIYMNLPKDENNPNSDDPDWVTGREDDEISAELRELQGTLKQVTKKNQKRKAQLIPLVERQLAWQEYSSILEDLDKQIDQAYVKRIRVPKKRKKHHTAASNNVNTGTTSQIAQQKAANSSLKSLLDKRQRWINKIGPLFDKPEIMKRIPNESVFKDMDQEEDEDEADVFAQNTNKDVELN.

Positions 1–10 (MPRHGRRGKL) are enriched in basic residues. Disordered stretches follow at residues 1–29 (MPRH…PSKL) and 90–224 (LRKI…VKNP). 2 stretches are compositionally biased toward basic and acidic residues: residues 11-22 (PKGEKLPKKEGG) and 90-108 (LRKI…EKQE). Over residues 109–125 (TSNADGQHESSTATEET) the composition is skewed to polar residues. Serine 134 carries the post-translational modification Phosphoserine. Residues 162-219 (MAKEEINEDKDLQVHRDQPREKRPFDSETENRATENENTQRPDNKKQKIDVDKMENDP) are compositionally biased toward basic and acidic residues. At serine 407 the chain carries Phosphoserine. At threonine 464 the chain carries Phosphothreonine. Residues 606–618 (KRIRVPKKRKKHH) carry the Nuclear localization signal motif. Disordered stretches follow at residues 611-636 (PKKR…IAQQ) and 672-702 (NESV…VELN). Over residues 620–636 (AASNNVNTGTTSQIAQQ) the composition is skewed to polar residues. Acidic residues predominate over residues 680-689 (DQEEDEDEAD).

The protein belongs to the NGG1 family. As to quaternary structure, component of the 1.8 MDa SAGA (Spt-Ada-Gcn5 acetyltransferase) complex, which is composed of 19 subunits TRA1, SPT7, TAF5, NGG1/ADA3, SGF73, SPT20/ADA5, SPT8, TAF12, TAF6, HFI1/ADA1, UBP8, GCN5, ADA2, SPT3, SGF29, TAF10, TAF9, SGF11 and SUS1. The SAGA complex is composed of 4 modules, namely the HAT (histone acetyltransferase) module (GCN5, ADA2, NGG1/ADA3 and SGF29), the DUB (deubiquitinating) module (UBP8, SGF11, SGF73 and SUS1), the core or TAF (TBP-associated factor) module (TAF5, TAF6, TAF9, TAF10 and TAF12), and the Tra1 or SPT (Suppressor of Ty) module (TRA1, HFI1/ADA1, SPT3, SPT7, SPT8 and SPT20/ADA5). The Tra1/SPT module binds activators, the core module recruits TBP (TATA-binding protein), the HAT module contains the histone H3 acetyltransferase GCN5, and the DUB module comprises the histone H2B deubiquitinase UBP8. Also identified in an altered form of SAGA, named SALSA (SAGA altered, Spt8 absent) or SLIK (SAGA-like) complex, which contains a C-terminal truncated form of SPT7 and is missing SPT8. However, it has been shown that the SAGA and SAGA-like SALSA/SLIK transcriptional coactivators are structurally and biochemically equivalent. Component of the 0.8 MDa ADA complex, a HAT complex distinct from SAGA, which at least consists of ADA2, NGG1/ADA3, AHC1, AHC2, SGF29 and GCN5. Identified in an Ada.spt complex with SPT7 and TRA1. Component of an ADA/GCN5 complex that consists of HFI1/ADA1, ADA2, NGG1/ADA3, SPT20/ADA5 and GCN5 and probably is a subcomplex of SAGA.

Its subcellular location is the nucleus. In terms of biological role, component of the transcription coactivator SAGA complex. SAGA acts as a general cofactor required for essentially all RNA polymerase II transcription. At the promoters, SAGA is required for transcription pre-initiation complex (PIC) recruitment. It influences RNA polymerase II transcriptional activity through different activities such as TBP interaction (via core/TAF module) and promoter selectivity, interaction with transcription activators (via Tra1/SPT module), and chromatin modification through histone acetylation (via HAT module) and deubiquitination (via DUB module). SAGA preferentially acetylates histones H3 (to form H3K9ac, H3K14ac, H3K18ac and H3K23ac) and H2B and deubiquitinates histone H2B. SAGA interacts with DNA via upstream activating sequences (UASs). Also identified in a modified version of SAGA named SALSA or SLIK. The cleavage of SPT7 and the absence of the SPT8 subunit in SLIK neither drive any major conformational differences in its structure compared with SAGA, nor significantly affect HAT, DUB, or DNA-binding activities. Component of the ADA histone acetyltransferase complex, which preferentially acetylates nucleosomal histones H3 (to form H3K14ac and H3K18ac) and H2B. May be involved in response to DNA damage by genotoxic agents. This chain is SAGA complex subunit NGG1 (NGG1), found in Saccharomyces cerevisiae (strain ATCC 204508 / S288c) (Baker's yeast).